The following is a 309-amino-acid chain: Porphobilinogen deaminase (309 aa).

Position 244 is an S-(dipyrrolylmethanemethyl)cysteine (cysteine 244).

Belongs to the HMBS family. Monomer. It depends on dipyrromethane as a cofactor.

The enzyme catalyses 4 porphobilinogen + H2O = hydroxymethylbilane + 4 NH4(+). It participates in porphyrin-containing compound metabolism; protoporphyrin-IX biosynthesis; coproporphyrinogen-III from 5-aminolevulinate: step 2/4. Tetrapolymerization of the monopyrrole PBG into the hydroxymethylbilane pre-uroporphyrinogen in several discrete steps. In Listeria monocytogenes serovar 1/2a (strain ATCC BAA-679 / EGD-e), this protein is Porphobilinogen deaminase.